We begin with the raw amino-acid sequence, 503 residues long: MFLEMLNPMQYNVTIMVPETVTVSAMPLLLIMGLLLLIWNCESSSSIPGPGYCLGIGPLISHGRFLWMGIGSACNYYNKMYGEFMRVWISGEETLIISKSSSMFHVMKHSHYISRFGSKRGLQCIGMHENGIIFNNNPSLWRTIRPFFMKALTGPGLVRMVEVCVESIKQHLDRLGEVTDTSGYVDVLTLMRHIMLDTSNMLFLGIPLDESAIVKKIQGYFNAWQALLIKPNIFFKISWLYRKYERSVKDLKDEIAVLVEKKRHKVSTAEKLEDCMDFATDLIFAERRGDLTKENVNQCILEMLIAAPDTMSVTLYFMLLLVAEYPEVEAAILKEIHTVVGDRDIKIEDIQNLKVVENFINESMRYQPVVDLVMRRALEDDVIDGYPVKKGTNIILNIGRMHRLEYFPKPNEFTLENFEKNVPYRYFQPFGFGPRGCAGKYIAMVMMKVVLVTLLRRFQVKTLQKRCIENIPKKNDLSLHPNEDRHLVEIIFSPRNSDKYLQQ.

Residues 21 to 41 (VTVSAMPLLLIMGLLLLIWNC) form a helical membrane-spanning segment. Residues Asp-309 and Met-374 each contribute to the substrate site. Position 437 (Cys-437) interacts with heme.

The protein belongs to the cytochrome P450 family. Heme is required as a cofactor.

Its subcellular location is the endoplasmic reticulum membrane. The protein resides in the microsome membrane. The enzyme catalyses testosterone + 3 reduced [NADPH--hemoprotein reductase] + 3 O2 = 17beta-estradiol + formate + 3 oxidized [NADPH--hemoprotein reductase] + 4 H2O + 4 H(+). It carries out the reaction androst-4-ene-3,17-dione + 3 reduced [NADPH--hemoprotein reductase] + 3 O2 = estrone + formate + 3 oxidized [NADPH--hemoprotein reductase] + 4 H2O + 4 H(+). It catalyses the reaction androst-4-ene-3,17-dione + reduced [NADPH--hemoprotein reductase] + O2 = 19-hydroxyandrost-4-ene-3,17-dione + oxidized [NADPH--hemoprotein reductase] + H2O + H(+). The catalysed reaction is 19-hydroxyandrost-4-ene-3,17-dione + reduced [NADPH--hemoprotein reductase] + O2 = 19-oxo-androst-4-ene-3,17-dione + oxidized [NADPH--hemoprotein reductase] + 2 H2O + H(+). The enzyme catalyses 19-oxo-androst-4-ene-3,17-dione + reduced [NADPH--hemoprotein reductase] + O2 = estrone + formate + oxidized [NADPH--hemoprotein reductase] + H2O + 2 H(+). It carries out the reaction estrone + reduced [NADPH--hemoprotein reductase] + O2 = 2-hydroxyestrone + oxidized [NADPH--hemoprotein reductase] + H2O + H(+). It catalyses the reaction 17beta-hydroxy-5alpha-androstan-3-one + reduced [NADPH--hemoprotein reductase] + O2 = 17beta,19-dihydroxy-3-oxo-5alpha-androstanone + oxidized [NADPH--hemoprotein reductase] + H2O + H(+). The catalysed reaction is 17beta,19-dihydroxy-3-oxo-5alpha-androstanone + reduced [NADPH--hemoprotein reductase] + O2 = 17beta-hydroxy-3,19-dioxo-5alpha-androstanone + oxidized [NADPH--hemoprotein reductase] + 2 H2O + H(+). The enzyme catalyses 17beta-hydroxy-3,19-dioxo-5alpha-androstanone + reduced [NADPH--hemoprotein reductase] + O2 = 17beta-hydroxy-3-oxo-19-nor-5alpha-androst-1-ene + formate + oxidized [NADPH--hemoprotein reductase] + H2O + 2 H(+). It functions in the pathway steroid hormone biosynthesis. A cytochrome P450 monooxygenase that catalyzes the conversion of C19 androgens, androst-4-ene-3,17-dione (androstenedione) and testosterone to the C18 estrogens, estrone and estradiol, respectively. Catalyzes three successive oxidations of C19 androgens: two conventional oxidations at C19 yielding 19-hydroxy and 19-oxo/19-aldehyde derivatives, followed by a third oxidative aromatization step that involves C1-beta hydrogen abstraction combined with cleavage of the C10-C19 bond to yield a phenolic A ring and formic acid. Alternatively, the third oxidative reaction yields a 19-norsteroid and formic acid. Converts dihydrotestosterone to delta1,10-dehydro 19-nordihydrotestosterone and may play a role in homeostasis of this potent androgen. Also displays 2-hydroxylase activity toward estrone. Mechanistically, uses molecular oxygen inserting one oxygen atom into a substrate, and reducing the second into a water molecule, with two electrons provided by NADPH via cytochrome P450 reductase (CPR; NADPH-ferrihemoprotein reductase). The chain is Aromatase (Cyp19a1) from Mus musculus (Mouse).